The primary structure comprises 354 residues: MASYTLAELAARVGGAVEGDGSLRLDGISPLEEASASEISFFSNRKYRKAFEASRAGAVVVEPDEQVAAGRTVLRVANAYLAFAKISTLFHPPREAVPEVAPTAVIHPTARVHPSAQVMPLACVGPDAQVGARTILFPGVHVADGARVGEDCVFYHNVVVRERCAVGNRVILQPGCVIGSDGFGFAFDPEGEGKGPRHYKVPQVGNVVIEDDVEVGANTCVDRATLGTTRIGRGAKIDNLVQIAHNVQVGPLSLLVSQVGVAGSTKLGMGVVAGGQAGIVGHLEIGDGVRIGAQSGVMADVEAGETVSGSPAVPHGNWLKAMASLDHLHDMRKELRSLRREVERLRADAGEDEP.

H245 functions as the Proton acceptor in the catalytic mechanism.

Belongs to the transferase hexapeptide repeat family. LpxD subfamily. In terms of assembly, homotrimer.

The enzyme catalyses a UDP-3-O-[(3R)-3-hydroxyacyl]-alpha-D-glucosamine + a (3R)-hydroxyacyl-[ACP] = a UDP-2-N,3-O-bis[(3R)-3-hydroxyacyl]-alpha-D-glucosamine + holo-[ACP] + H(+). The protein operates within bacterial outer membrane biogenesis; LPS lipid A biosynthesis. Catalyzes the N-acylation of UDP-3-O-acylglucosamine using 3-hydroxyacyl-ACP as the acyl donor. Is involved in the biosynthesis of lipid A, a phosphorylated glycolipid that anchors the lipopolysaccharide to the outer membrane of the cell. This chain is UDP-3-O-acylglucosamine N-acyltransferase, found in Anaeromyxobacter dehalogenans (strain 2CP-1 / ATCC BAA-258).